The sequence spans 211 residues: tRNA (guanine-N(7)-)-methyltransferase (211 aa).

Positions 44, 69, 96, and 118 each coordinate S-adenosyl-L-methionine. Aspartate 118 is an active-site residue. Lysine 122 provides a ligand contact to substrate. The interval lysine 124–arginine 129 is interaction with RNA. Substrate contacts are provided by residues aspartate 154 and threonine 191–glutamate 194.

The protein belongs to the class I-like SAM-binding methyltransferase superfamily. TrmB family.

It catalyses the reaction guanosine(46) in tRNA + S-adenosyl-L-methionine = N(7)-methylguanosine(46) in tRNA + S-adenosyl-L-homocysteine. The protein operates within tRNA modification; N(7)-methylguanine-tRNA biosynthesis. Its function is as follows. Catalyzes the formation of N(7)-methylguanine at position 46 (m7G46) in tRNA. The chain is tRNA (guanine-N(7)-)-methyltransferase from Streptococcus uberis (strain ATCC BAA-854 / 0140J).